A 539-amino-acid chain; its full sequence is Gamma-2-syntrophin (539 aa).

The region spanning 73–156 (TVTLRRQPVG…EVTITVEYLR (84 aa)) is the PDZ domain. Low complexity-rich tracts occupy residues 168–183 (SPGP…SSPL) and 194–205 (SSTTAPSSPSSP). A disordered region spans residues 168–209 (SPGPSSDHSSGASSPLFDSGLHLNGNSSTTAPSSPSSPIAKD). One can recognise a PH domain in the interval 296 to 421 (QVVHMGWVNE…WEKSFQRATF (126 aa)).

The protein belongs to the syntrophin family. As to quaternary structure, interacts with the dystrophin protein DMD and related proteins DTNA and DTNB. In terms of tissue distribution, widely expressed. Strong expression in brain and testis. In CNS, it is expressed in the perikaryon and proximal portion of the neuronal processes. Strong expression in the hippocampus, neuron-rich dendate granule cells, and pyramidal cell layers. Highly expressed in neurons of the cerebral cortex. Also expressed in the cerebellar cortex, deep cerebellar nuclei, thalamus, and basal ganglia.

It localises to the cell membrane. The protein localises to the sarcolemma. The protein resides in the cytoplasm. It is found in the cytoskeleton. Its function is as follows. Adapter protein that binds to and probably organizes the subcellular localization of a variety of proteins. May link various receptors to the actin cytoskeleton and the dystrophin glycoprotein complex. The chain is Gamma-2-syntrophin (SNTG2) from Homo sapiens (Human).